A 947-amino-acid polypeptide reads, in one-letter code: DNA polymerase (947 aa).

It belongs to the DNA polymerase type-B family.

It catalyses the reaction DNA(n) + a 2'-deoxyribonucleoside 5'-triphosphate = DNA(n+1) + diphosphate. This chain is DNA polymerase, found in Red sea bream iridovirus (RSIV).